The sequence spans 214 residues: Ribonuclease HII (214 aa).

Residues 26–214 (EIVCGVDEAG…PVRAALDLIR (189 aa)) form the RNase H type-2 domain. Residues Asp-32, Glu-33, and Asp-124 each coordinate a divalent metal cation.

This sequence belongs to the RNase HII family. It depends on Mn(2+) as a cofactor. Mg(2+) serves as cofactor.

Its subcellular location is the cytoplasm. It carries out the reaction Endonucleolytic cleavage to 5'-phosphomonoester.. In terms of biological role, endonuclease that specifically degrades the RNA of RNA-DNA hybrids. The polypeptide is Ribonuclease HII (Burkholderia cenocepacia (strain HI2424)).